Consider the following 456-residue polypeptide: Bifunctional protein GlmU (456 aa).

Residues 1–229 (MLNNAMSVVI…LSEVEGVNNR (229 aa)) form a pyrophosphorylase region. Residues 11 to 14 (LAAG), K25, Q76, 81 to 82 (GT), 103 to 105 (YGD), G140, E154, N169, and N227 each bind UDP-N-acetyl-alpha-D-glucosamine. A Mg(2+)-binding site is contributed by D105. Residue N227 participates in Mg(2+) binding. The tract at residues 230–250 (LQLSRLERVYQSEQAEKLLLA) is linker. Residues 251 to 456 (GVMLRDPARF…EGWRRPVKKK (206 aa)) are N-acetyltransferase. 2 residues coordinate UDP-N-acetyl-alpha-D-glucosamine: R333 and K351. Residue H363 is the Proton acceptor of the active site. Positions 366 and 377 each coordinate UDP-N-acetyl-alpha-D-glucosamine. Residues A380, 386 to 387 (NY), S405, A423, and R440 each bind acetyl-CoA.

In the N-terminal section; belongs to the N-acetylglucosamine-1-phosphate uridyltransferase family. This sequence in the C-terminal section; belongs to the transferase hexapeptide repeat family. As to quaternary structure, homotrimer. Mg(2+) serves as cofactor.

The protein localises to the cytoplasm. It catalyses the reaction alpha-D-glucosamine 1-phosphate + acetyl-CoA = N-acetyl-alpha-D-glucosamine 1-phosphate + CoA + H(+). It carries out the reaction N-acetyl-alpha-D-glucosamine 1-phosphate + UTP + H(+) = UDP-N-acetyl-alpha-D-glucosamine + diphosphate. The protein operates within nucleotide-sugar biosynthesis; UDP-N-acetyl-alpha-D-glucosamine biosynthesis; N-acetyl-alpha-D-glucosamine 1-phosphate from alpha-D-glucosamine 6-phosphate (route II): step 2/2. It functions in the pathway nucleotide-sugar biosynthesis; UDP-N-acetyl-alpha-D-glucosamine biosynthesis; UDP-N-acetyl-alpha-D-glucosamine from N-acetyl-alpha-D-glucosamine 1-phosphate: step 1/1. Its pathway is bacterial outer membrane biogenesis; LPS lipid A biosynthesis. In terms of biological role, catalyzes the last two sequential reactions in the de novo biosynthetic pathway for UDP-N-acetylglucosamine (UDP-GlcNAc). The C-terminal domain catalyzes the transfer of acetyl group from acetyl coenzyme A to glucosamine-1-phosphate (GlcN-1-P) to produce N-acetylglucosamine-1-phosphate (GlcNAc-1-P), which is converted into UDP-GlcNAc by the transfer of uridine 5-monophosphate (from uridine 5-triphosphate), a reaction catalyzed by the N-terminal domain. The chain is Bifunctional protein GlmU from Escherichia coli (strain 55989 / EAEC).